We begin with the raw amino-acid sequence, 329 residues long: Ferredoxin--NAD(P)(+) reductase CarAd (329 aa).

Residues 2 to 92 enclose the 2Fe-2S ferredoxin-type domain; that stretch reads YQLKIEGQAP…DLRIKVAVQD (91 aa). 4 residues coordinate [2Fe-2S] cluster: Cys35, Cys40, Cys43, and Cys76. An FAD-binding FR-type domain is found at 100 to 200; sequence ISRMEAEVVE…TGPMGTSFFR (101 aa).

Monomer. Carbazole 1,9a-dioxygenase complex consists of a terminal oxygenase component CarAa, a ferredoxin reductase component CarAd and a ferredoxin component CarAc. [2Fe-2S] cluster serves as cofactor. FAD is required as a cofactor.

The catalysed reaction is 2 reduced [2Fe-2S]-[ferredoxin] + NAD(+) + H(+) = 2 oxidized [2Fe-2S]-[ferredoxin] + NADH. It carries out the reaction 2 reduced [2Fe-2S]-[ferredoxin] + NADP(+) + H(+) = 2 oxidized [2Fe-2S]-[ferredoxin] + NADPH. In terms of biological role, part of the multicomponent carbazole 1,9a-dioxygenase (CARDO), that converts carbazole (CAR) into 2-aminobiphenyl-2,3-diol. It can use both NAD and NADP as electron donors, but NAD is supposed to be the physiological electron donor. In Metapseudomonas resinovorans (Pseudomonas resinovorans), this protein is Ferredoxin--NAD(P)(+) reductase CarAd (carAd).